Here is a 305-residue protein sequence, read N- to C-terminus: Phosphoribosylaminoimidazole-succinocarboxamide synthase (305 aa).

The protein belongs to the SAICAR synthetase family.

The enzyme catalyses 5-amino-1-(5-phospho-D-ribosyl)imidazole-4-carboxylate + L-aspartate + ATP = (2S)-2-[5-amino-1-(5-phospho-beta-D-ribosyl)imidazole-4-carboxamido]succinate + ADP + phosphate + 2 H(+). Its pathway is purine metabolism; IMP biosynthesis via de novo pathway; 5-amino-1-(5-phospho-D-ribosyl)imidazole-4-carboxamide from 5-amino-1-(5-phospho-D-ribosyl)imidazole-4-carboxylate: step 1/2. This is Phosphoribosylaminoimidazole-succinocarboxamide synthase from Tropheryma whipplei (strain Twist) (Whipple's bacillus).